Reading from the N-terminus, the 98-residue chain is MIPGGLSEAKPATPEIQEIVDKVKPQLEEKTNETYGKLEAVQYKTQVVAGTNYYIKVRAGDNKYMHLKVFKSLPGQNEDLVLTGYQVDKNKDDELTGF.

Residue methionine 1 is modified to N-acetylmethionine. Positions 46 to 50 match the Secondary area of contact motif; the sequence is QVVAG.

It belongs to the cystatin family. Expressed in the skin throughout the epidermis.

The protein resides in the cytoplasm. In terms of biological role, this is an intracellular thiol proteinase inhibitor. Has an important role in desmosome-mediated cell-cell adhesion in the lower levels of the epidermis. This chain is Cystatin-A (CSTA), found in Homo sapiens (Human).